Consider the following 258-residue polypeptide: Glucose 1-dehydrogenase 2 (258 aa).

Residue 11–35 participates in NADP(+) binding; that stretch reads IVTGSSKGIGKAIAERFGKEKMNVV. Ser-146 is a substrate binding site. The Proton acceptor role is filled by Tyr-159.

It belongs to the short-chain dehydrogenases/reductases (SDR) family. In terms of assembly, homotetramer.

The catalysed reaction is D-glucose + NAD(+) = D-glucono-1,5-lactone + NADH + H(+). It catalyses the reaction D-glucose + NADP(+) = D-glucono-1,5-lactone + NADPH + H(+). The sequence is that of Glucose 1-dehydrogenase 2 (ycdF) from Bacillus subtilis (strain 168).